We begin with the raw amino-acid sequence, 305 residues long: Acyl transferase (305 aa).

Active-site charge relay system residues include S116, D213, and H243.

This sequence belongs to the LuxD family.

It participates in lipid metabolism; fatty acid reduction for biolumincescence. Functionally, acyl transferase is part of the fatty acid reductase system required for aldehyde biosynthesis; it produces fatty acids for the luminescent reaction. In Photobacterium leiognathi, this protein is Acyl transferase.